The primary structure comprises 466 residues: Phosphomethylpyrimidine synthase (466 aa).

Residues asparagine 80, methionine 109, tyrosine 139, histidine 175, 195-197 (SRG), 236-239 (DSLR), and glutamate 275 contribute to the substrate site. Histidine 279 serves as a coordination point for Zn(2+). Substrate is bound at residue tyrosine 302. Histidine 343 serves as a coordination point for Zn(2+). [4Fe-4S] cluster-binding residues include cysteine 423, cysteine 426, and cysteine 431.

This sequence belongs to the ThiC family. The cofactor is [4Fe-4S] cluster.

The enzyme catalyses 5-amino-1-(5-phospho-beta-D-ribosyl)imidazole + S-adenosyl-L-methionine = 4-amino-2-methyl-5-(phosphooxymethyl)pyrimidine + CO + 5'-deoxyadenosine + formate + L-methionine + 3 H(+). The protein operates within cofactor biosynthesis; thiamine diphosphate biosynthesis. Its function is as follows. Catalyzes the synthesis of the hydroxymethylpyrimidine phosphate (HMP-P) moiety of thiamine from aminoimidazole ribotide (AIR) in a radical S-adenosyl-L-methionine (SAM)-dependent reaction. The sequence is that of Phosphomethylpyrimidine synthase from Synechococcus sp. (strain RCC307).